A 224-amino-acid polypeptide reads, in one-letter code: Peroxiredoxin-6 (224 aa).

Residues 5 to 169 (LLLGDEAPNF…ILRVIISLQL (165 aa)) enclose the Thioredoxin domain. The required and sufficient for targeting to lysosomes and lamellar bodies stretch occupies residues 31 to 40 (DSWGILFSHP). Threonine 44 is modified (phosphothreonine). The Cysteine sulfenic acid (-SOH) intermediate; for peroxidase activity role is filled by cysteine 47. Lysine 63 bears the N6-acetyllysine mark. A Phosphotyrosine modification is found at tyrosine 89. Aspartate 140 (for phospholipase activity) is an active-site residue. Threonine 177 is modified (phosphothreonine; by MAPK). Residue lysine 209 is modified to N6-acetyllysine; alternate. Lysine 209 is modified (N6-succinyllysine; alternate).

Belongs to the peroxiredoxin family. Prx6 subfamily. Homodimer. Interacts with GSTP1; mediates PRDX6 glutathionylation and regeneration. Interacts with APEX1. Interacts with STH. May interact with FAM168B. May interact with HTR2A. Requires Does not need Ca(2+) as cofactor. as cofactor. In terms of processing, irreversibly inactivated by overoxidation of Cys-47 to sulfinic acid (Cys-SO(2)H) and sulfonic acid (Cys-SO(3)H) forms upon oxidative stress. Phosphorylation at Thr-177 by MAP kinases increases the phospholipase activity of the enzyme. The phosphorylated form exhibits a greater lysophosphatidylcholine acyltransferase activity compared to the non-phosphorylated form.

It localises to the cytoplasm. The protein resides in the lysosome. The catalysed reaction is a hydroperoxide + 2 glutathione = an alcohol + glutathione disulfide + H2O. It catalyses the reaction a 1,2-diacyl-sn-glycero-3-phosphocholine + H2O = a 1-acyl-sn-glycero-3-phosphocholine + a fatty acid + H(+). It carries out the reaction a 1-acyl-sn-glycero-3-phosphocholine + an acyl-CoA = a 1,2-diacyl-sn-glycero-3-phosphocholine + CoA. The enzyme catalyses 1-hexadecanoyl-sn-glycero-3-phosphocholine + hexadecanoyl-CoA = 1,2-dihexadecanoyl-sn-glycero-3-phosphocholine + CoA. The catalysed reaction is 1,2-dihexadecanoyl-sn-glycero-3-phosphocholine + H2O = 1-hexadecanoyl-sn-glycero-3-phosphocholine + hexadecanoate + H(+). Its function is as follows. Thiol-specific peroxidase that catalyzes the reduction of hydrogen peroxide and organic hydroperoxides to water and alcohols, respectively. Can reduce H(2)O(2) and short chain organic, fatty acid, and phospholipid hydroperoxides. Also has phospholipase activity, and can therefore either reduce the oxidized sn-2 fatty acyl group of phospholipids (peroxidase activity) or hydrolyze the sn-2 ester bond of phospholipids (phospholipase activity). These activities are dependent on binding to phospholipids at acidic pH and to oxidized phospholipds at cytosolic pH. Plays a role in cell protection against oxidative stress by detoxifying peroxides and in phospholipid homeostasis. Exhibits acyl-CoA-dependent lysophospholipid acyltransferase which mediates the conversion of lysophosphatidylcholine (1-acyl-sn-glycero-3-phosphocholine or LPC) into phosphatidylcholine (1,2-diacyl-sn-glycero-3-phosphocholine or PC). Shows a clear preference for LPC as the lysophospholipid and for palmitoyl CoA as the fatty acyl substrate. In Bos taurus (Bovine), this protein is Peroxiredoxin-6 (PRDX6).